The chain runs to 95 residues: Large ribosomal subunit protein uL23 (95 aa).

The protein belongs to the universal ribosomal protein uL23 family. Part of the 50S ribosomal subunit. Contacts protein L29, and trigger factor when it is bound to the ribosome.

One of the early assembly proteins it binds 23S rRNA. One of the proteins that surrounds the polypeptide exit tunnel on the outside of the ribosome. Forms the main docking site for trigger factor binding to the ribosome. This is Large ribosomal subunit protein uL23 from Bacillus pumilus (strain SAFR-032).